The primary structure comprises 92 residues: Cell division protein FtsB (92 aa).

Topologically, residues 1–3 (MRL) are cytoplasmic. A helical transmembrane segment spans residues 4–21 (LILILLSVLVLFQHDFWF). At 22–92 (GSNGFLDYRQ…VFYHIVKESK (71 aa)) the chain is on the periplasmic side. A coiled-coil region spans residues 28–63 (DYRQNAEKIKENQAENEKLSQRNQRINAEIQGLTKG).

Belongs to the FtsB family. Part of a complex composed of FtsB, FtsL and FtsQ.

It localises to the cell inner membrane. Essential cell division protein. May link together the upstream cell division proteins, which are predominantly cytoplasmic, with the downstream cell division proteins, which are predominantly periplasmic. The polypeptide is Cell division protein FtsB (Haemophilus influenzae (strain PittEE)).